Reading from the N-terminus, the 156-residue chain is Small ribosomal subunit protein uS7 (156 aa).

This sequence belongs to the universal ribosomal protein uS7 family. Part of the 30S ribosomal subunit. Contacts proteins S9 and S11.

Its function is as follows. One of the primary rRNA binding proteins, it binds directly to 16S rRNA where it nucleates assembly of the head domain of the 30S subunit. Is located at the subunit interface close to the decoding center, probably blocks exit of the E-site tRNA. The protein is Small ribosomal subunit protein uS7 of Rippkaea orientalis (strain PCC 8801 / RF-1) (Cyanothece sp. (strain PCC 8801)).